Reading from the N-terminus, the 511-residue chain is Peptide transporter YePEPT (511 aa).

Topologically, residues Met1–Pro19 are cytoplasmic. A helical transmembrane segment spans residues Leu20–Met45. Residues Ala46–Glu59 are Periplasmic-facing. A helical transmembrane segment spans residues Gln60–Asp84. Residues Asn85–Gly88 are Cytoplasmic-facing. A helical transmembrane segment spans residues Gln89 to Leu109. Residues Ser110 to Asn115 lie on the Periplasmic side of the membrane. A helical membrane pass occupies residues Asp116–Val138. Residues Met139–Ala149 are Cytoplasmic-facing. Residues Arg150 to Trp175 traverse the membrane as a helical segment. At Leu176–Gly181 the chain is on the periplasmic side. A helical transmembrane segment spans residues Trp182–Met208. The Cytoplasmic segment spans residues Lys209–Gly232. A helical membrane pass occupies residues Arg233–Val253. Topologically, residues Ile254–Ile256 are periplasmic. A helical membrane pass occupies residues Asn257–Tyr279. The Cytoplasmic portion of the chain corresponds to Leu280–Leu294. The chain crosses the membrane as a helical span at residues Leu295–Phe321. Over Ala322 to Ile335 the chain is Periplasmic. Residues Pro336 to Trp357 form a helical membrane-spanning segment. Residues Ala358 to Pro369 lie on the Cytoplasmic side of the membrane. A helical transmembrane segment spans residues Ser370 to Val396. Topologically, residues Leu397–Ser405 are periplasmic. A helical transmembrane segment spans residues Pro406–Ile426. Residues Gly427–Gly441 are Cytoplasmic-facing. Residues Gln442 to Gly462 form a helical membrane-spanning segment. Topologically, residues Gly463–Asp471 are periplasmic. A helical membrane pass occupies residues Met472 to Val496. Topologically, residues Pro497 to Ala511 are cytoplasmic.

The protein belongs to the major facilitator superfamily. Proton-dependent oligopeptide transporter (POT/PTR) (TC 2.A.17) family.

It localises to the cell inner membrane. Transport is inhibited by the proton ionophore carbonyl cyanide m-chlorophenylhydrazone (CCCP). Functionally, mediates the proton-dependent uptake of dipeptides. Shows higher affinity for dipeptides with a negatively charged amino acid residue at the N-terminal position, such as Asp-Ala and Glu-Ala. Also displays specificity for Ala-Ala, Ala-Tyr and Tyr-Ala. This chain is Peptide transporter YePEPT, found in Yersinia enterocolitica subsp. palearctica serotype O:3 (strain YE-P4).